A 205-amino-acid chain; its full sequence is LexA repressor (205 aa).

Positions 28–48 (RAEIAHKLGFRSANSAEEHLK) form a DNA-binding region, H-T-H motif. Active-site for autocatalytic cleavage activity residues include Ser-122 and Lys-159.

Belongs to the peptidase S24 family. As to quaternary structure, homodimer.

It catalyses the reaction Hydrolysis of Ala-|-Gly bond in repressor LexA.. Represses a number of genes involved in the response to DNA damage (SOS response), including recA and lexA. In the presence of single-stranded DNA, RecA interacts with LexA causing an autocatalytic cleavage which disrupts the DNA-binding part of LexA, leading to derepression of the SOS regulon and eventually DNA repair. The protein is LexA repressor of Idiomarina loihiensis (strain ATCC BAA-735 / DSM 15497 / L2-TR).